Reading from the N-terminus, the 744-residue chain is 4'-phospho-dehydrooxetanocin synthase (744 aa).

Residues 119–259 (TVTLVNLCVI…KMLKKELKLD (141 aa)) form the B12-binding domain. Cob(II)alamin-binding residues include Arg-135, Ser-139, Ser-184, Gly-241, Glu-242, and Glu-308. The 247-residue stretch at 299 to 545 (SKFRGALTLE…IVSYMLASME (247 aa)) folds into the Radical SAM core domain. 3 residues coordinate [4Fe-4S] cluster: Cys-313, Cys-318, and Cys-321. 5 residues coordinate cob(II)alamin: Pro-322, His-325, Lys-326, Ala-361, and Glu-363. S-adenosyl-L-methionine contacts are provided by Glu-436 and Glu-545.

The protein belongs to the radical SAM superfamily. [4Fe-4S] cluster is required as a cofactor. Cob(II)alamin serves as cofactor.

The catalysed reaction is dAMP + S-adenosyl-L-methionine = 4'-phospho-dehydrooxetanocin + 5'-deoxyadenosine + L-methionine + H(+). It carries out the reaction AH2 + 2 S-adenosyl-L-methionine = 2 5'-deoxyadenosin-5'-yl radical + 2 L-methionine + A + 2 H(+). The enzyme catalyses 2 5'-deoxyadenosin-5'-yl radical + 2 dAMP + A = 2 4'-phospho-dehydrooxetanocin + 2 5'-deoxyadenosine + AH2. Its activity is regulated as follows. Requires OxsA for the oxidative ring contraction activity. Activation of OxsB requires its direct interaction with OxsA and is independent of OxsA phosphohydrolase activity. In contrast to ring contraction, methylation does not require the presence of OxsA. Isomerase involved in the biosynthesis of oxetanocin A (OXT-A), a nucleoside analog with antitumor, antiviral and antibacterial properties. Catalyzes an oxidative ring contraction of dAMP, forming an oxetane aldehyde. In addition, shows methyltransferase activity in vitro and is able to catalyze the radical mediated, stereoselective C2'-methylation of dAMP to form methylated 2'-dAMP. Also catalyzes the demethylation of S-adenosyl-L-methionine (SAM) to S-adenosyl-L-homocysteine (SAH). This Priestia megaterium (Bacillus megaterium) protein is 4'-phospho-dehydrooxetanocin synthase.